The chain runs to 246 residues: Acetylglutamate kinase (246 aa).

Substrate is bound by residues 30–31 (GG), Arg-52, and Asn-151.

Belongs to the acetylglutamate kinase family. ArgB subfamily.

It localises to the cytoplasm. It catalyses the reaction N-acetyl-L-glutamate + ATP = N-acetyl-L-glutamyl 5-phosphate + ADP. Its pathway is amino-acid biosynthesis; L-arginine biosynthesis; N(2)-acetyl-L-ornithine from L-glutamate: step 2/4. Catalyzes the ATP-dependent phosphorylation of N-acetyl-L-glutamate. The polypeptide is Acetylglutamate kinase (Methanopyrus kandleri (strain AV19 / DSM 6324 / JCM 9639 / NBRC 100938)).